Consider the following 183-residue polypeptide: Large ribosomal subunit protein uL5 (183 aa).

Belongs to the universal ribosomal protein uL5 family. Part of the 50S ribosomal subunit; part of the 5S rRNA/L5/L18/L25 subcomplex. Contacts the 5S rRNA and the P site tRNA. Forms a bridge to the 30S subunit in the 70S ribosome.

Functionally, this is one of the proteins that bind and probably mediate the attachment of the 5S RNA into the large ribosomal subunit, where it forms part of the central protuberance. In the 70S ribosome it contacts protein S13 of the 30S subunit (bridge B1b), connecting the 2 subunits; this bridge is implicated in subunit movement. Contacts the P site tRNA; the 5S rRNA and some of its associated proteins might help stabilize positioning of ribosome-bound tRNAs. The protein is Large ribosomal subunit protein uL5 of Legionella pneumophila (strain Lens).